A 564-amino-acid polypeptide reads, in one-letter code: Proline--tRNA ligase (564 aa).

The protein belongs to the class-II aminoacyl-tRNA synthetase family. ProS type 1 subfamily. In terms of assembly, homodimer.

Its subcellular location is the cytoplasm. The enzyme catalyses tRNA(Pro) + L-proline + ATP = L-prolyl-tRNA(Pro) + AMP + diphosphate. In terms of biological role, catalyzes the attachment of proline to tRNA(Pro) in a two-step reaction: proline is first activated by ATP to form Pro-AMP and then transferred to the acceptor end of tRNA(Pro). As ProRS can inadvertently accommodate and process non-cognate amino acids such as alanine and cysteine, to avoid such errors it has two additional distinct editing activities against alanine. One activity is designated as 'pretransfer' editing and involves the tRNA(Pro)-independent hydrolysis of activated Ala-AMP. The other activity is designated 'posttransfer' editing and involves deacylation of mischarged Ala-tRNA(Pro). The misacylated Cys-tRNA(Pro) is not edited by ProRS. This Coxiella burnetii (strain Dugway 5J108-111) protein is Proline--tRNA ligase.